The chain runs to 386 residues: MKNITILGSTGSIGVSTLEVVSAHPDRFRVVALTAGNNLEMLRQQIETFRPQMVSVLSEKLAVELDRSLPGYKPEIHYGVEGLIAAATAGDAHMVVAAIVGAAGLVPTAAAIRAGKDVALANKETLVTAGRLIMDLVRDKNVRLYPVDSEHSAVFQSMEGQSRKDVLRIILTASGGPFLNLPLDQLSRVSIDDALNHPNWSMGRKITIDSATMMNKGLEVIEARWLFDTPAERIDVNIHPQSIIHSMVEYVDGSVMAQLGVPDMKAPIAYALTYPERVPTGVNPLDLTALSGLTFFKPDYRRFPALKLAYDALAAGESMPAVMNAANEVAVEAFLSGVIGFIDIAATIARIMDAHEAHTLSTIEEALITDRWAREKARELVGLVRR.

Positions 10, 11, 12, 13, 36, 38, and 122 each coordinate NADPH. A 1-deoxy-D-xylulose 5-phosphate-binding site is contributed by K123. E124 provides a ligand contact to NADPH. Mn(2+) is bound at residue D148. The 1-deoxy-D-xylulose 5-phosphate site is built by S149, E150, S174, and H197. E150 contacts Mn(2+). G203 is a binding site for NADPH. S210, N215, K216, and E219 together coordinate 1-deoxy-D-xylulose 5-phosphate. E219 contacts Mn(2+).

Belongs to the DXR family. The cofactor is Mg(2+). Mn(2+) is required as a cofactor.

It catalyses the reaction 2-C-methyl-D-erythritol 4-phosphate + NADP(+) = 1-deoxy-D-xylulose 5-phosphate + NADPH + H(+). It participates in isoprenoid biosynthesis; isopentenyl diphosphate biosynthesis via DXP pathway; isopentenyl diphosphate from 1-deoxy-D-xylulose 5-phosphate: step 1/6. Catalyzes the NADPH-dependent rearrangement and reduction of 1-deoxy-D-xylulose-5-phosphate (DXP) to 2-C-methyl-D-erythritol 4-phosphate (MEP). In Geobacter sulfurreducens (strain ATCC 51573 / DSM 12127 / PCA), this protein is 1-deoxy-D-xylulose 5-phosphate reductoisomerase.